Here is a 189-residue protein sequence, read N- to C-terminus: Phosphomevalonate kinase (189 aa).

Residues 10–16 (KRKCGKD) and arginine 138 each bind ATP. Asparagine 168 lines the substrate pocket.

Its subcellular location is the cytoplasm. It is found in the cytosol. It catalyses the reaction (R)-5-phosphomevalonate + ATP = (R)-5-diphosphomevalonate + ADP. Its pathway is isoprenoid biosynthesis; isopentenyl diphosphate biosynthesis via mevalonate pathway; isopentenyl diphosphate from (R)-mevalonate: step 2/3. The chain is Phosphomevalonate kinase from Drosophila melanogaster (Fruit fly).